The chain runs to 207 residues: Small ribosomal subunit protein uS4 (207 aa).

The disordered stretch occupies residues 31-53 (KAKFDSKPGQHGRTSGARTSDFG). The 61-residue stretch at 97–157 (SRLDNVVYRM…EKSKKQARIV (61 aa)) folds into the S4 RNA-binding domain.

The protein belongs to the universal ribosomal protein uS4 family. In terms of assembly, part of the 30S ribosomal subunit. Contacts protein S5. The interaction surface between S4 and S5 is involved in control of translational fidelity.

Functionally, one of the primary rRNA binding proteins, it binds directly to 16S rRNA where it nucleates assembly of the body of the 30S subunit. With S5 and S12 plays an important role in translational accuracy. In Paracidovorax citrulli (strain AAC00-1) (Acidovorax citrulli), this protein is Small ribosomal subunit protein uS4.